The following is a 322-amino-acid chain: MAPGKGGYKQINKALNICAFEDYLDGQQATLPPLQDVEQISPRVIRVLGQNPGKFTLQGTNTYIVGTGSERLIIDTGQGIPDWADLISTTLLDGNFSLSHVLLTHWHGDHTGGVPDLLRLYPDLISGIYKHTPSKIQQPIEDGQVFKVEGATVRAVHAPGHSSDHMCFILEEEQAMFTGDNVLGHGTSAVEHLSTWMAALQQMKSHNCRKGYPAHGIVINDLQGRITGQLAQKFRRERQVLKALEQVKSQERAMAGGRGKGSVTVKQLVSTMHGDSLDGGIRELALEPFTEEILRKLAEDGKVAFEIRTGIKKWFVVGTALD.

Zn(2+)-binding residues include His105, His107, Asp109, and His110. The active-site Proton donor/acceptor is Asp109.

Belongs to the metallo-beta-lactamase superfamily. Requires Zn(2+) as cofactor.

The enzyme catalyses atrochrysone carboxyl-[ACP] + H2O = atrochrysone carboxylate + holo-[ACP] + H(+). It participates in secondary metabolite biosynthesis. In terms of biological role, atrochrysone carboxyl ACP thioesterase; part of the gene cluster that mediates the biosynthesis of the dimeric xanthones cryptosporioptides. The pathway begins with the synthesis of atrochrysone thioester by the polyketide synthase dmx-nrPKS. The atrochrysone carboxyl ACP thioesterase dmxR1 then breaks the thioester bond and releases the atrochrysone carboxylic acid from dmx-nrPKS. Atrochrysone carboxylic acid is decarboxylated by the decarboxylase dmxR15, and oxidized by the anthrone oxygenase dmxR16 to yield emodin. Emodin is then reduced to emodin hydroquinone by the oxidoreductase dmxR7. A-ring reduction by the short chain dehydrogenase dmxR18, dehydration by the scytalone dehydratase-like protein dmxR17 and probable spontaneous re-oxidation, results in overall deoxygenation to chrysophanol. Baeyer-Villiger oxidation by the Baeyer-Villiger monooxygenase (BVMO) dmxR6 then yields monodictylactone in equilibrium with monodictyphenone. In the case of the cryptosporioptides biosynthesis, monodictylactone is reduced at C-12 to an alcohol (by the short chain dehydrogenases dmxR12 or dmxR8) and hydroxylated at C-5 by dmxR9, yielding the electron-rich aromatic which could eliminate H(2)O to form the ortho-quinonemethide, followed by tautomerisation to paraquinone and complete the formal reduction to produce the 10-methylgroup. Conjugate addition of C-4a-OH to the resulting paraquinone by the monooxygenase dmxR10 then gives cyclohexadienone, which is then reduced at C-5 by the short chain dehydrogenase dmxR3 to give the dihydroxanthone. The 6,7-epoxide in the cryptosporioptides could be introduced by the cytochrome P450 monooxygenase dmxL3. The highly reducing PKS dmxL2 manufactures butyrate, which is further carboxylated by dmxL1 to form ethylmalonate. It is not yet clear whether the carboxylation occurs while the butyrate is attached to the ACP of dmxL2, but this unusual fungal metabolite could then be esterified to O-5 by the O-acetyltransferase dmxR13. Finally, dimerization performed by dmxR5 gives the observed dimers cryptosporioptides A, B and C as the final products of the pathway. The polypeptide is Atrochrysone carboxyl ACP thioesterase dmxR1 (Cryptosporiopsis sp. (strain 8999)).